A 283-amino-acid polypeptide reads, in one-letter code: Non-selective voltage-gated ion channel VDAC1 (283 aa).

Position 2 is an N-acetylalanine (A2). Residue K12 participates in ATP binding. K12 is covalently cross-linked (Glycyl lysine isopeptide (Lys-Gly) (interchain with G-Cter in ubiquitin)). S13 carries the phosphoserine modification. Position 19 is a phosphothreonine (T19). K20 contributes to the ATP binding site. The residue at position 20 (K20) is an N6-acetyllysine; alternate. An N6-succinyllysine; alternate modification is found at K20. K20 is covalently cross-linked (Glycyl lysine isopeptide (Lys-Gly) (interchain with G-Cter in ubiquitin); alternate). The next 2 beta stranded transmembrane spans lie at 26–35 (LIKLDLKTKS) and 39–47 (LEFTSSGSA). Glycyl lysine isopeptide (Lys-Gly) (interchain with G-Cter in ubiquitin) cross-links involve residues K53 and K61. Residues 54-64 (VTGSLETKYRW) form a beta stranded membrane-spanning segment. A Phosphotyrosine modification is found at Y67. 3 beta stranded membrane passes run 69 to 76 (LTFTEKWN), 80 to 89 (TLGTEITVED), and 95 to 104 (LKLTFDSSFS). Position 107 is a phosphothreonine (T107). K109 carries the N6-acetyllysine; alternate modification. K109 is covalently cross-linked (Glycyl lysine isopeptide (Lys-Gly) (interchain with G-Cter in ubiquitin); alternate). K110 is covalently cross-linked (Glycyl lysine isopeptide (Lys-Gly) (interchain with G-Cter in ubiquitin)). 4 beta stranded membrane-spanning segments follow: residues 111 to 120 (NAKIKTGYKR), 123 to 130 (INLGCDMD), 137 to 145 (SIRGALVLG), and 150 to 158 (LAGYQMNFE). K161 is covalently cross-linked (Glycyl lysine isopeptide (Lys-Gly) (interchain with G-Cter in ubiquitin)). Beta stranded transmembrane passes span 163–175 (RVTQSNFAVGYKT), 178–185 (FQLHTNVN), 189–198 (EFGGSIYQKV), 202–211 (LETAVNLAWT), 218–227 (RFGIAAKYQI), and 231–238 (ACFSAKVN). S193 is modified (phosphoserine; by NEK1). The residue at position 240 (S240) is a Phosphoserine. 242 to 244 (LIG) is a binding site for NAD(+). Residues 242–251 (LIGLGYTQTL) traverse the membrane as a beta stranded segment. N6-acetyllysine is present on K252. Residues 254–263 (GIKLTLSALL) traverse the membrane as a beta stranded segment. 260–264 (SALLD) serves as a coordination point for NAD(+). The residue at position 266 (K266) is an N6-acetyllysine; alternate. Residue K266 forms a Glycyl lysine isopeptide (Lys-Gly) (interchain with G-Cter in ubiquitin); alternate linkage. The chain crosses the membrane as a beta stranded span at residues 273-282 (HKLGLGLEFQ). K274 participates in a covalent cross-link: Glycyl lysine isopeptide (Lys-Gly) (interchain with G-Cter in ubiquitin).

Belongs to the eukaryotic mitochondrial porin family. Homodimer and homotrimer; in response to cyclic AMP or calcium; oligomerization is required for scramblase activity. Component of the mitochondrial permeability transition pore complex (mPTPC), at least composed of SPG7, VDAC1 and PPIF. Interacts with SPG7, NIPSNAP2 and SLC25A30. Interacts with hexokinases including HK1. The HK1-VDAC1 complex interacts with ATF2. Interacts with BCL2L1. Interacts with BAK1. Interacts with RTL10/BOP (via BH3 domain). Interacts with amyloid-beta and APP; induces VDAC1 dephosphorylation. Interacts with TMEM41B. Interacts with BCAP31. Interacts with HSPA9; this interaction couples ITPR1 to VDAC1. In terms of assembly, (Microbial infection) Interacts with influenza A virus PB1-F2 protein. In terms of processing, phosphorylation at Ser-193 by NEK1 promotes the closed conformational state preventing excessive mitochondrial membrane permeability and subsequent apoptotic cell death after injury. Phosphorylation by the AKT-GSK3B axis stabilizes the protein probably by preventing ubiquitin-mediated proteasomal degradation. Post-translationally, ubiquitinated. Undergoes monoubiquitination and polyubiquitination by PRKN; monoubiquitination at Lys-274 inhibits apoptosis, whereas polyubiquitination leads to its degradation and promotes mitophagy. Deubiquitinated by USP30. As to expression, expressed in erythrocytes (at protein level). Expressed in heart, liver and skeletal muscle.

It localises to the mitochondrion outer membrane. It is found in the cell membrane. The protein localises to the membrane raft. The catalysed reaction is chloride(in) = chloride(out). The enzyme catalyses K(+)(in) = K(+)(out). It catalyses the reaction ATP(in) = ATP(out). It carries out the reaction Ca(2+)(in) = Ca(2+)(out). The catalysed reaction is Na(+)(in) = Na(+)(out). The enzyme catalyses Mg(2+)(in) = Mg(2+)(out). It catalyses the reaction L-glutamate(out) = L-glutamate(in). It carries out the reaction dopamine(out) = dopamine(in). The catalysed reaction is acetylcholine(in) = acetylcholine(out). The enzyme catalyses Fe(III)-[cytochrome c](out) = Fe(III)-[cytochrome c](in). It catalyses the reaction a 1,2-diacyl-sn-glycero-3-phosphocholine(in) = a 1,2-diacyl-sn-glycero-3-phosphocholine(out). It carries out the reaction a 1,2-diacyl-sn-glycero-3-phospho-L-serine(in) = a 1,2-diacyl-sn-glycero-3-phospho-L-serine(out). Inhibited by nitric oxide. Functionally, non-selective voltage-gated ion channel that mediates the transport of anions and cations through the mitochondrion outer membrane and plasma membrane. The channel at the outer mitochondrial membrane allows diffusion of small hydrophilic molecules; in the plasma membrane it is involved in cell volume regulation and apoptosis. It adopts an open conformation at low or zero membrane potential and a closed conformation at potentials above 30-40 mV. The open state has a weak anion selectivity whereas the closed state is cation-selective. Binds various signaling molecules, including the sphingolipid ceramide, the phospholipid phosphatidylcholine, and the sterols cholesterol and oxysterol. In depolarized mitochondria, acts downstream of PRKN and PINK1 to promote mitophagy or prevent apoptosis; polyubiquitination by PRKN promotes mitophagy, while monoubiquitination by PRKN decreases mitochondrial calcium influx which ultimately inhibits apoptosis. May participate in the formation of the permeability transition pore complex (PTPC) responsible for the release of mitochondrial products that triggers apoptosis. May mediate ATP export from cells. Part of a complex composed of HSPA9, ITPR1 and VDAC1 that regulates mitochondrial calcium-dependent apoptosis by facilitating calcium transport from the ER lumen to the mitochondria intermembrane space thus providing calcium for the downstream calcium channel MCU that directly releases it into mitochondria matrix. Mediates cytochrome c efflux. In terms of biological role, catalyzes the scrambling of phospholipids across the outer mitochondrial membrane; the mechanism is unrelated to channel activity and is capable of translocating both anionic and zwitterionic phospholipids. In Homo sapiens (Human), this protein is Non-selective voltage-gated ion channel VDAC1.